Here is a 314-residue protein sequence, read N- to C-terminus: UDP-N-acetylenolpyruvoylglucosamine reductase (314 aa).

Residues 27–192 (KIGGKARYIV…LRAVFCLKFA (166 aa)) form the FAD-binding PCMH-type domain. Arg-171 is an active-site residue. The active-site Proton donor is the Ser-223. Glu-293 is an active-site residue.

It belongs to the MurB family. Requires FAD as cofactor.

It localises to the cytoplasm. The catalysed reaction is UDP-N-acetyl-alpha-D-muramate + NADP(+) = UDP-N-acetyl-3-O-(1-carboxyvinyl)-alpha-D-glucosamine + NADPH + H(+). Its pathway is cell wall biogenesis; peptidoglycan biosynthesis. Cell wall formation. The polypeptide is UDP-N-acetylenolpyruvoylglucosamine reductase (Caldicellulosiruptor bescii (strain ATCC BAA-1888 / DSM 6725 / KCTC 15123 / Z-1320) (Anaerocellum thermophilum)).